Reading from the N-terminus, the 486-residue chain is N-succinylglutamate 5-semialdehyde dehydrogenase (486 aa).

220–225 lines the NAD(+) pocket; that stretch reads GSSRTG. Residues glutamate 243 and cysteine 277 contribute to the active site.

Belongs to the aldehyde dehydrogenase family. AstD subfamily.

It catalyses the reaction N-succinyl-L-glutamate 5-semialdehyde + NAD(+) + H2O = N-succinyl-L-glutamate + NADH + 2 H(+). It participates in amino-acid degradation; L-arginine degradation via AST pathway; L-glutamate and succinate from L-arginine: step 4/5. Its function is as follows. Catalyzes the NAD-dependent reduction of succinylglutamate semialdehyde into succinylglutamate. The sequence is that of N-succinylglutamate 5-semialdehyde dehydrogenase from Shewanella halifaxensis (strain HAW-EB4).